A 110-amino-acid chain; its full sequence is Secreted Ly-6/uPAR-related protein 1 (110 aa).

A signal peptide spans 1 to 22 (MTLRWAMWLLLLAAWSMGYGEA). In terms of domain architecture, UPAR/Ly6 spans 24–73 (RCYTCEQPTAINSCKNIAQCKMEDTACKTVLETVEAAFPFNHSPMVTRSC). Intrachain disulfides connect Cys-25–Cys-50, Cys-28–Cys-37, Cys-43–Cys-73, Cys-77–Cys-93, and Cys-94–Cys-99.

In terms of assembly, homodimer. Interacts with PLAU. Interacts with CHRNA7. In terms of tissue distribution, expressed in skin, eye, whole lung, trachea, esophagus and stomach. Widely expressed in various tissues including spleen and thymus but not pancreas. Expressed in macrophages, dendritic cells, T and B cells. Expressed in lung specifically in ciliated bronchial epithelial cells (at protein level). Expression is decreased in lungs of asthmatic model mice. Expressed in the cornea.

Its subcellular location is the secreted. Its function is as follows. Has an antitumor activity. Was found to be a marker of late differentiation of the skin. Implicated in maintaining the physiological and structural integrity of the keratinocyte layers of the skin. In vitro down-regulates keratinocyte proliferation; the function may involve the proposed role as modulator of nicotinic acetylcholine receptors (nAChRs) activity. In vitro inhibits alpha-7-dependent nAChR currents in an allosteric manner. In T cells may be involved in regulation of intracellular Ca(2+) signaling. Seems to have a immunomodulatory function in the cornea. The function may implicate a possible role as a scavenger receptor for PLAU thereby blocking PLAU-dependent functions of PLAUR such as in cell migration and proliferation. In Mus musculus (Mouse), this protein is Secreted Ly-6/uPAR-related protein 1 (Slurp1).